The sequence spans 362 residues: Chorismate synthase (362 aa).

A disordered region spans residues 39–59 (ADLQGDLDRRKPGTSRYTTPR). 2 residues coordinate NADP(+): arginine 48 and arginine 54. FMN contacts are provided by residues 125-127 (RSS), 238-239 (NA), glycine 278, 293-297 (KPTSS), and arginine 319.

Belongs to the chorismate synthase family. In terms of assembly, homotetramer. The cofactor is FMNH2.

It catalyses the reaction 5-O-(1-carboxyvinyl)-3-phosphoshikimate = chorismate + phosphate. It participates in metabolic intermediate biosynthesis; chorismate biosynthesis; chorismate from D-erythrose 4-phosphate and phosphoenolpyruvate: step 7/7. Functionally, catalyzes the anti-1,4-elimination of the C-3 phosphate and the C-6 proR hydrogen from 5-enolpyruvylshikimate-3-phosphate (EPSP) to yield chorismate, which is the branch point compound that serves as the starting substrate for the three terminal pathways of aromatic amino acid biosynthesis. This reaction introduces a second double bond into the aromatic ring system. The sequence is that of Chorismate synthase from Aeromonas hydrophila subsp. hydrophila (strain ATCC 7966 / DSM 30187 / BCRC 13018 / CCUG 14551 / JCM 1027 / KCTC 2358 / NCIMB 9240 / NCTC 8049).